Here is a 376-residue protein sequence, read N- to C-terminus: Protein RecA (376 aa).

78 to 85 (GPESSGKT) is a binding site for ATP. The disordered stretch occupies residues 355–376 (PVELVPNVDFDDEADTEADAED). Residues 363–376 (DFDDEADTEADAED) are compositionally biased toward acidic residues.

The protein belongs to the RecA family.

It is found in the cytoplasm. Functionally, can catalyze the hydrolysis of ATP in the presence of single-stranded DNA, the ATP-dependent uptake of single-stranded DNA by duplex DNA, and the ATP-dependent hybridization of homologous single-stranded DNAs. It interacts with LexA causing its activation and leading to its autocatalytic cleavage. This is Protein RecA from Corynebacterium glutamicum (strain R).